The primary structure comprises 156 residues: Biotin carboxyl carrier protein of acetyl-CoA carboxylase (156 aa).

Residues 80–156 form the Biotinyl-binding domain; the sequence is GNVVRSPMVG…EFDQPLFTIV (77 aa). N6-biotinyllysine is present on Lys122.

In terms of assembly, homodimer.

It functions in the pathway lipid metabolism; fatty acid biosynthesis. In terms of biological role, this protein is a component of the acetyl coenzyme A carboxylase complex; first, biotin carboxylase catalyzes the carboxylation of the carrier protein and then the transcarboxylase transfers the carboxyl group to form malonyl-CoA. The sequence is that of Biotin carboxyl carrier protein of acetyl-CoA carboxylase (accB) from Pseudomonas aeruginosa (strain ATCC 15692 / DSM 22644 / CIP 104116 / JCM 14847 / LMG 12228 / 1C / PRS 101 / PAO1).